The sequence spans 184 residues: Bifunctional protein PyrR (184 aa).

The PRPP-binding motif lies at 105–117 (VVMVDDVLFTGRT).

Belongs to the purine/pyrimidine phosphoribosyltransferase family. PyrR subfamily.

The catalysed reaction is UMP + diphosphate = 5-phospho-alpha-D-ribose 1-diphosphate + uracil. Regulates the transcription of the pyrimidine nucleotide (pyr) operon in response to exogenous pyrimidines. Its function is as follows. Also displays a weak uracil phosphoribosyltransferase activity which is not physiologically significant. This is Bifunctional protein PyrR from Rubrobacter xylanophilus (strain DSM 9941 / JCM 11954 / NBRC 16129 / PRD-1).